Here is a 417-residue protein sequence, read N- to C-terminus: Nucleosome assembly protein (417 aa).

The interval 1–47 is disordered; the sequence is MSDPIRTKPKSSMQIDNAPTPHNTPASVLNPSYLKNGNPVRAQAQEQ. Polar residues predominate over residues 10-35; the sequence is KSSMQIDNAPTPHNTPASVLNPSYLK. Phosphothreonine occurs at positions 20 and 24. Phosphoserine is present on serine 27. Lysine 50 is covalently cross-linked (Glycyl lysine isopeptide (Lys-Gly) (interchain with G-Cter in ubiquitin)). Residue threonine 53 is modified to Phosphothreonine. Serine 69, serine 76, serine 82, serine 98, serine 104, and serine 140 each carry phosphoserine. An interaction with NBA1 region spans residues 143–362; that stretch reads EQPKPEQIAK…IPRAVDWFTG (220 aa). 2 positions are modified to phosphoserine; by CK2: serine 159 and serine 177. The H-T-H motif DNA-binding region spans 330-356; the sequence is LEEDLEERLALDYSIGEQLKDKLIPRA. Residues 364 to 417 form a disordered region; sequence ALEFEFEEDEEEADEDEDEEEDDDHGLEDDDGESAEEQDDFAGRPEQAPECKQS. Positions 367-403 are enriched in acidic residues; sequence FEFEEDEEEADEDEDEEEDDDHGLEDDDGESAEEQDD. Serine 397 is subject to Phosphoserine; by CK2. The span at 404 to 417 shows a compositional bias: basic and acidic residues; it reads FAGRPEQAPECKQS.

Belongs to the nucleosome assembly protein (NAP) family. Component of the GIN4 complex composed of at least BNI5, CDC3, CDC10, CDC11, CDC12, GIN4, NAP1 and SHS1 which forms a ring at the bud neck. Homodimer (in-vitro). Interacts with the B-type cyclin CLB2. Interacts with 60S ribosomal protein L18 (RPL18A or RPL18B), CKA2, CKI1, eukaryotic elongation factor 1 complex eEF1A (TEF1 or TEF2), FOL1, HSC82, HTA2, HTB2, HTZ1, KAP114, KCC4, NIS1, SSA1, SSA2, SSB1, SSC1, SHM1, SIP5 and TCO89. Interacts with NBA1. Interacts with histone H3/H4 heterodimers. Phosphorylation by CK2 is required for normal progression through S phase. CK2 phosphorylation is not required for correct bud formation nor histone binding.

The protein resides in the cytoplasm. It is found in the nucleus. The protein localises to the bud neck. In terms of biological role, acidic protein, which assembles histones into an octamer (in vitro). Involved in the regulation of the localization and the function of the septins during mitosis. Involved in the function of B-type cyclins. This is Nucleosome assembly protein from Saccharomyces cerevisiae (strain ATCC 204508 / S288c) (Baker's yeast).